The sequence spans 513 residues: Sugar transport protein 7 (513 aa).

The Cytoplasmic portion of the chain corresponds to 1-26; that stretch reads MAGGSFGPTGVAKERAEQYQGKVTSY. 12 consecutive transmembrane segments (helical) span residues 27–47, 84–104, 121–141, 144–164, 171–191, 205–225, 286–306, 324–344, 351–371, 387–407, 427–447, and 452–472; these read VIIA…DIGI, GLAA…LVAS, ISFL…MLLA, IMLG…LSEV, GGLN…ANMV, LSLG…YFLP, LVMA…SILF, YSSA…IGLV, ALLI…AVIL, VIVV…WGPL, ITVA…LGLL, and FGIF…VYFL. The Cytoplasmic segment spans residues 473 to 513; the sequence is LPETKGVPIEEMTLLWSKHWFWKKVLPDATNLEDESKNVSV.

It belongs to the major facilitator superfamily. Sugar transporter (TC 2.A.1.1) family.

It is found in the cell membrane. In terms of biological role, mediates an active uptake of hexoses, probably by sugar/hydrogen symport. The protein is Sugar transport protein 7 (STP7) of Arabidopsis thaliana (Mouse-ear cress).